A 1134-amino-acid polypeptide reads, in one-letter code: Early transcription factor large subunit homolog (1134 aa).

The Helicase ATP-binding domain maps to 52-352 (KGGRAFFPCD…PNGQPLQRQQ (301 aa)). 99-106 (WQTGTGKS) is an ATP binding site. The DEAH box motif lies at 281-284 (DEIH). The Helicase C-terminal domain occupies 524 to 725 (MMKDILSIIR…EGDKALRKHA (202 aa)).

The protein belongs to the DEAD box helicase family. DEAH subfamily.

The protein resides in the virion. It catalyses the reaction ATP + H2O = ADP + phosphate + H(+). Functionally, putative initation factor. The sequence is that of Early transcription factor large subunit homolog from African swine fever virus (isolate Pig/Kenya/KEN-50/1950) (ASFV).